The primary structure comprises 1693 residues: Latrophilin Cirl (1693 aa).

Over 1-774 (MVLQGAKQRL…LFTMFDGNMR (774 aa)) the chain is Extracellular. The SUEL-type lectin domain occupies 30-119 (ACEGKKLTIE…KYLEAHYQCV (90 aa)). Asn-147, Asn-260, Asn-306, and Asn-345 each carry an N-linked (GlcNAc...) asparagine glycan. The disordered stretch occupies residues 190 to 309 (PPATHATPPG…GPSVSSNGSA (120 aa)). Polar residues-rich tracts occupy residues 259 to 269 (SNATAPSNTRI) and 287 to 309 (KSSPNRTPGTAASGPSVSSNGSA). The tract at residues 379-406 (SFDEDDEEMAGTSTTTPMSTSGDCLHNS) is disordered. Residues 390 to 399 (TSTTTPMSTS) are compositionally biased toward low complexity. 4 N-linked (GlcNAc...) asparagine glycosylation sites follow: Asn-405, Asn-662, Asn-710, and Asn-737. In terms of domain architecture, GAIN-B spans 568–761 (RSVVQKVKNI…AILMDVVDEH (194 aa)). 2 cysteine pairs are disulfide-bonded: Cys-716/Cys-743 and Cys-731/Cys-745. The interval 716-761 (CVFWNYIDHAWSANGCSLESTNRTHSVCSCNHLTNFAILMDVVDEH) is GPS. A helical transmembrane segment spans residues 775 to 795 (IFIYISIAICVVFIVIALLTL). Over 796–808 (KLFNGVFVKSART) the chain is Cytoplasmic. A helical transmembrane segment spans residues 809-829 (SIYINIYICLLAIELLFLLGI). Residues 830–835 (EQTETS) lie on the Extracellular side of the membrane. A helical transmembrane segment spans residues 836–856 (IFCGFITVFLHCAILSGTSWF). The Cytoplasmic segment spans residues 857-882 (CYEAFHSYSTLTSDELLLEVDQTPKV). Residues 883-903 (NCYYLLSYGLSLSVVAISLVI) traverse the membrane as a helical segment. Residues 904–927 (NPSTYTQNDYCVLMEANAVFYATF) are Extracellular-facing. The chain crosses the membrane as a helical span at residues 928–948 (VAPVLIFFMAAIGYTFLSWII). Residues 949-975 (MCRKSRTGLKTKEHTRLATVRFDIRCS) lie on the Cytoplasmic side of the membrane. The helical transmembrane segment at 976-996 (FVFFLLLSAVWCSAYFYLRGA) threads the bilayer. At 997–1003 (KMDEDVT) the chain is on the extracellular side. The chain crosses the membrane as a helical span at residues 1004–1024 (GIYGYNFICFNTLLGLYIFVF). The Cytoplasmic segment spans residues 1025–1693 (HCIQNEKIRR…VRCYLEPLAK (669 aa)). Positions 1089–1109 (PLGTNDDAHDEQQQQQHMSAT) are disordered. Ser-1165, Ser-1256, and Ser-1263 each carry phosphoserine. Disordered regions lie at residues 1237-1264 (KPNSQHGKKKRGGVGAIPASPSGSLHSR), 1279-1362 (KTKP…APPP), 1450-1529 (SRYG…LPPQ), and 1596-1678 (SMRG…SAML). Positions 1307–1323 (QQQQQLRQQRQQQQQQL) are enriched in low complexity. Phosphoserine is present on residues Ser-1324 and Ser-1325. Low complexity predominate over residues 1337-1357 (LHLQHQQQQQQQRRAGGQQQL). Over residues 1464–1475 (RNQQQQQHSLAQ) the composition is skewed to polar residues. Acidic residues-rich tracts occupy residues 1485 to 1498 (DEDDDEDEDDEETT) and 1508 to 1521 (CDEEEEDEESDMED). Over residues 1640–1663 (QQLQKLSPQSTTSSSSHTSHSNPH) the composition is skewed to low complexity.

This sequence belongs to the G-protein coupled receptor 2 family. LN-TM7 subfamily. Forms a heterodimer, consisting of a large extracellular region non-covalently linked to a seven-transmembrane moiety. Post-translationally, proteolytically cleaved into 2 subunits, an extracellular subunit and a seven-transmembrane subunit.

The protein localises to the cell membrane. The polypeptide is Latrophilin Cirl (Drosophila pseudoobscura pseudoobscura (Fruit fly)).